The primary structure comprises 63 residues: Conotoxin LeDr243 (63 aa).

An N-terminal signal peptide occupies residues 1–22 (MRCLPVFVILLLLIASTPSIDA). Positions 23-47 (RPKTKDDMPLASFNDNAKRILQILS) are excised as a propeptide. Cysteine 60 is modified (cysteine amide). Residues 62-63 (LG) constitute a propeptide that is removed on maturation.

It belongs to the conotoxin T superfamily. Post-translationally, contains 2 disulfide bonds that can be either 'C1-C3, C2-C4' or 'C1-C4, C2-C3', since these disulfide connectivities have been observed for conotoxins with cysteine framework V (for examples, see AC P0DQQ7 and AC P81755). Expressed by the venom duct.

Its subcellular location is the secreted. The chain is Conotoxin LeDr243 from Conus litteratus (Lettered cone).